The chain runs to 164 residues: MSKTAQIAVVMGSKSDWATMQEATQILDELNVPYHVEVVSAHRTPDKLFEFAENAQKNGYKVIIAGAGGAAHLPGMIAAKTLVPVLGVPVKSSMLSGVDSLYSIVQMPKGIPVGTLAIGPAGAANAGLLAAQILAGWDDALFTRLQAFRENQTNMVLDNPDPRT.

The substrate site is built by serine 13, aspartate 16, and arginine 43.

The protein belongs to the AIR carboxylase family. Class I subfamily.

The enzyme catalyses 5-carboxyamino-1-(5-phospho-D-ribosyl)imidazole + H(+) = 5-amino-1-(5-phospho-D-ribosyl)imidazole-4-carboxylate. It functions in the pathway purine metabolism; IMP biosynthesis via de novo pathway; 5-amino-1-(5-phospho-D-ribosyl)imidazole-4-carboxylate from 5-amino-1-(5-phospho-D-ribosyl)imidazole (N5-CAIR route): step 2/2. Its function is as follows. Catalyzes the conversion of N5-carboxyaminoimidazole ribonucleotide (N5-CAIR) to 4-carboxy-5-aminoimidazole ribonucleotide (CAIR). The sequence is that of N5-carboxyaminoimidazole ribonucleotide mutase from Haemophilus influenzae (strain ATCC 51907 / DSM 11121 / KW20 / Rd).